Reading from the N-terminus, the 399-residue chain is Elongation factor Tu (399 aa).

A tr-type G domain is found at 10-204 (KPHVNIGTIG…AVDASIPEPE (195 aa)). The G1 stretch occupies residues 19–26 (GHVDHGKT). Residue 19–26 (GHVDHGKT) coordinates GTP. Threonine 26 contacts Mg(2+). The tract at residues 60–64 (GITIN) is G2. Residues 81 to 84 (DCPG) form a G3 region. Residues 81-85 (DCPGH) and 136-139 (NKCD) contribute to the GTP site. The interval 136–139 (NKCD) is G4. A G5 region spans residues 174–176 (SGL).

It belongs to the TRAFAC class translation factor GTPase superfamily. Classic translation factor GTPase family. EF-Tu/EF-1A subfamily. In terms of assembly, monomer.

Its subcellular location is the cytoplasm. It carries out the reaction GTP + H2O = GDP + phosphate + H(+). Its function is as follows. GTP hydrolase that promotes the GTP-dependent binding of aminoacyl-tRNA to the A-site of ribosomes during protein biosynthesis. In Prochlorococcus marinus (strain MIT 9515), this protein is Elongation factor Tu.